We begin with the raw amino-acid sequence, 246 residues long: MTQRIAYVTGGMGGIGTAICQRLAKDGFRVVAGCGPNSPRREKWLEQQKALGFDFIASEGNVADWDSTKTAFDKVKSEVGEVDVLINNAGITRDVVFRKMTRADWDAVIDTNLTSLFNVTKQVIDGMADRGWGRIVNISSVNGQKGQFGQTNYSTAKAGLHGFTMALAQEVATKGVTVNTVSPGYIATDMVKAIRQDVLDKIVATIPVKRLGLPEEIASICAWLSSEESGFSTGADFSLNGGLHMG.

NADP(+) contacts are provided by residues 13-15, Gly-35, Arg-40, 60-62, and 88-92; these read GGI, GNV, and NAGIT. Residues Asp-94 and 147–150 contribute to the substrate site; that span reads QFGQ. Tyr-153 acts as the Proton acceptor in catalysis. An NADP(+)-binding site is contributed by 183-186; the sequence is PGYI. Residues 184-185 and Arg-195 each bind substrate; that span reads GY.

It belongs to the short-chain dehydrogenases/reductases (SDR) family. As to quaternary structure, homotetramer.

It is found in the cytoplasm. It catalyses the reaction a (3R)-3-hydroxyacyl-CoA + NADP(+) = a 3-oxoacyl-CoA + NADPH + H(+). The enzyme catalyses (3R)-3-hydroxybutanoyl-CoA + NADP(+) = acetoacetyl-CoA + NADPH + H(+). Its pathway is biopolymer metabolism; poly-(R)-3-hydroxybutanoate biosynthesis. Functionally, catalyzes the chiral reduction of acetoacetyl-CoA to (R)-3-hydroxybutyryl-CoA. Is involved in the biosynthesis of polyhydroxybutyrate (PHB), which is accumulated as an intracellular energy reserve material when cells grow under conditions of nutrient limitation. The polypeptide is Acetoacetyl-CoA reductase (Cupriavidus necator (strain ATCC 17699 / DSM 428 / KCTC 22496 / NCIMB 10442 / H16 / Stanier 337) (Ralstonia eutropha)).